The primary structure comprises 271 residues: Small ribosomal subunit protein uS9m (271 aa).

Residues 1 to 11 constitute a mitochondrion transit peptide; that stretch reads MFRSLAKLRCF. Residues 251–271 form a disordered region; that stretch reads KVERKKTGQPKARKKYTWVKR. Residues 252 to 271 are compositionally biased toward basic residues; sequence VERKKTGQPKARKKYTWVKR.

It belongs to the universal ribosomal protein uS9 family. Component of the mitochondrial small ribosomal subunit (mt-SSU). Mature yeast 74S mitochondrial ribosomes consist of a small (37S) and a large (54S) subunit. The 37S small subunit contains a 15S ribosomal RNA (15S mt-rRNA) and at least 32 different proteins. The 54S large subunit contains a 21S rRNA (21S mt-rRNA) and at least 45 different proteins.

The protein localises to the mitochondrion. Component of the mitochondrial ribosome (mitoribosome), a dedicated translation machinery responsible for the synthesis of mitochondrial genome-encoded proteins, including at least some of the essential transmembrane subunits of the mitochondrial respiratory chain. The mitoribosomes are attached to the mitochondrial inner membrane and translation products are cotranslationally integrated into the membrane. The sequence is that of Small ribosomal subunit protein uS9m (mrps9) from Schizosaccharomyces pombe (strain 972 / ATCC 24843) (Fission yeast).